The primary structure comprises 504 residues: Arabinose import ATP-binding protein AraG (504 aa).

ABC transporter domains follow at residues 8–243 (LSFR…MVGR) and 256–499 (YGEE…MPKV). Position 40–47 (40–47 (GENGAGKS)) interacts with ATP.

Belongs to the ABC transporter superfamily. Arabinose importer (TC 3.A.1.2.2) family. As to quaternary structure, the complex is composed of two ATP-binding proteins (AraG), two transmembrane proteins (AraH) and a solute-binding protein (AraF).

Its subcellular location is the cell inner membrane. The catalysed reaction is L-arabinose(out) + ATP + H2O = L-arabinose(in) + ADP + phosphate + H(+). In terms of biological role, part of the ABC transporter complex AraFGH involved in arabinose import. Responsible for energy coupling to the transport system. The protein is Arabinose import ATP-binding protein AraG of Shigella flexneri.